Reading from the N-terminus, the 337-residue chain is Tetraacyldisaccharide 4'-kinase (337 aa).

58-65 contacts ATP; sequence TVGGSGKT.

It belongs to the LpxK family.

It carries out the reaction a lipid A disaccharide + ATP = a lipid IVA + ADP + H(+). The protein operates within glycolipid biosynthesis; lipid IV(A) biosynthesis; lipid IV(A) from (3R)-3-hydroxytetradecanoyl-[acyl-carrier-protein] and UDP-N-acetyl-alpha-D-glucosamine: step 6/6. Functionally, transfers the gamma-phosphate of ATP to the 4'-position of a tetraacyldisaccharide 1-phosphate intermediate (termed DS-1-P) to form tetraacyldisaccharide 1,4'-bis-phosphate (lipid IVA). In Shewanella putrefaciens (strain CN-32 / ATCC BAA-453), this protein is Tetraacyldisaccharide 4'-kinase.